Reading from the N-terminus, the 284-residue chain is RNase adapter protein RapZ (284 aa).

8–15 provides a ligand contact to ATP; it reads GRSGSGKS. 56 to 59 is a binding site for GTP; that stretch reads DVRN. The segment at 266–284 is RNA-binding; the sequence is RSRGKNVQSRHRTLEKRKP.

It belongs to the RapZ-like family. RapZ subfamily. As to quaternary structure, homotrimer.

Its function is as follows. Modulates the synthesis of GlmS, by affecting the processing and stability of the regulatory small RNA GlmZ. When glucosamine-6-phosphate (GlcN6P) concentrations are high in the cell, RapZ binds GlmZ and targets it to cleavage by RNase E. Consequently, GlmZ is inactivated and unable to activate GlmS synthesis. Under low GlcN6P concentrations, RapZ is sequestered and inactivated by an other regulatory small RNA, GlmY, preventing GlmZ degradation and leading to synthesis of GlmS. This Shigella boydii serotype 18 (strain CDC 3083-94 / BS512) protein is RNase adapter protein RapZ.